A 600-amino-acid chain; its full sequence is Aspartate--tRNA(Asp/Asn) ligase (600 aa).

Glu174 provides a ligand contact to L-aspartate. The segment at 198–201 (QLFK) is aspartate. An L-aspartate-binding site is contributed by Arg220. Residues 220-222 (RDE) and Gln229 contribute to the ATP site. His457 lines the L-aspartate pocket. Glu491 serves as a coordination point for ATP. Position 498 (Arg498) interacts with L-aspartate. Residue 543 to 546 (GLDR) coordinates ATP.

It belongs to the class-II aminoacyl-tRNA synthetase family. Type 1 subfamily. In terms of assembly, homodimer.

The protein localises to the cytoplasm. The catalysed reaction is tRNA(Asx) + L-aspartate + ATP = L-aspartyl-tRNA(Asx) + AMP + diphosphate. In terms of biological role, aspartyl-tRNA synthetase with relaxed tRNA specificity since it is able to aspartylate not only its cognate tRNA(Asp) but also tRNA(Asn). Reaction proceeds in two steps: L-aspartate is first activated by ATP to form Asp-AMP and then transferred to the acceptor end of tRNA(Asp/Asn). This is Aspartate--tRNA(Asp/Asn) ligase from Burkholderia lata (strain ATCC 17760 / DSM 23089 / LMG 22485 / NCIMB 9086 / R18194 / 383).